The chain runs to 497 residues: Guanosine-5'-triphosphate,3'-diphosphate pyrophosphatase (497 aa).

Belongs to the GppA/Ppx family. GppA subfamily.

It catalyses the reaction guanosine 3'-diphosphate 5'-triphosphate + H2O = guanosine 3',5'-bis(diphosphate) + phosphate + H(+). It functions in the pathway purine metabolism; ppGpp biosynthesis; ppGpp from GTP: step 2/2. Its function is as follows. Catalyzes the conversion of pppGpp to ppGpp. Guanosine pentaphosphate (pppGpp) is a cytoplasmic signaling molecule which together with ppGpp controls the 'stringent response', an adaptive process that allows bacteria to respond to amino acid starvation, resulting in the coordinated regulation of numerous cellular activities. This chain is Guanosine-5'-triphosphate,3'-diphosphate pyrophosphatase, found in Pseudoalteromonas translucida (strain TAC 125).